Reading from the N-terminus, the 527-residue chain is Tetanolysin (527 aa).

The first 32 residues, 1-32, serve as a signal peptide directing secretion; sequence MNKNVLKFVSRSLLIFSMTGLISNYNSSNVLA. 4 beta stranded membrane-spanning segments follow: residues 215–228, 235–244, 313–322, and 330–342; these read QSQL…NFKA, IDFDSIFKGE, SSHVKAAFKA, and SSNA…LNQS. A Conserved undecapeptide motif is present at residues 484–494; it reads ECTGLAWEWWR. The short motif at 516-517 is the Cholesterol binding element; sequence TL.

Belongs to the cholesterol-dependent cytolysin family. As to quaternary structure, homooligomeric pore complex containing 35-50 subunits; when inserted in the host membrane. Purified 48 and 53 kDa proteins with 4 different pIs (6.1, 5.6, 5.3 and 6.6) in decreasing order of activity.

The protein localises to the secreted. The protein resides in the host cell membrane. Cytolysis of host cells is inhibited by cholesterol. A cholesterol-dependent toxin that causes cytolysis by forming pores in cholesterol-containing host membranes. After binding to target membranes, the protein undergoes a major conformation change, leading to its insertion in the host membrane and formation of an oligomeric pore complex. Cholesterol is required for binding to host membranes, membrane insertion and pore formation; cholesterol binding is mediated by a Thr-Leu pair in the C-terminus. In Clostridium tetani (strain Massachusetts / E88), this protein is Tetanolysin.